Reading from the N-terminus, the 249-residue chain is Elongator complex protein 6 homolog (249 aa).

Belongs to the ELP6 family. As to quaternary structure, component of the elongator complex.

It localises to the cytoplasm. It is found in the nucleus. The protein operates within tRNA modification; 5-methoxycarbonylmethyl-2-thiouridine-tRNA biosynthesis. In terms of biological role, component of the elongator complex which is required for multiple tRNA modifications, including mcm5U (5-methoxycarbonylmethyl uridine), mcm5s2U (5-methoxycarbonylmethyl-2-thiouridine), and ncm5U (5-carbamoylmethyl uridine). The elongator complex catalyzes formation of carboxymethyluridine in the wobble base at position 34 in tRNAs. This Schizosaccharomyces pombe (strain 972 / ATCC 24843) (Fission yeast) protein is Elongator complex protein 6 homolog.